Here is a 334-residue protein sequence, read N- to C-terminus: Glycerol-3-phosphate dehydrogenase [NAD(P)+] (334 aa).

NADPH is bound by residues Ser-14, Tyr-15, His-35, and Lys-109. 3 residues coordinate sn-glycerol 3-phosphate: Lys-109, Gly-138, and Thr-140. Ala-142 is an NADPH binding site. Sn-glycerol 3-phosphate-binding residues include Lys-194, Asp-247, Ser-257, Arg-258, and Asn-259. Lys-194 functions as the Proton acceptor in the catalytic mechanism. Arg-258 provides a ligand contact to NADPH. NADPH-binding residues include Val-282 and Glu-284.

It belongs to the NAD-dependent glycerol-3-phosphate dehydrogenase family.

Its subcellular location is the cytoplasm. The catalysed reaction is sn-glycerol 3-phosphate + NAD(+) = dihydroxyacetone phosphate + NADH + H(+). It catalyses the reaction sn-glycerol 3-phosphate + NADP(+) = dihydroxyacetone phosphate + NADPH + H(+). It participates in membrane lipid metabolism; glycerophospholipid metabolism. Its function is as follows. Catalyzes the reduction of the glycolytic intermediate dihydroxyacetone phosphate (DHAP) to sn-glycerol 3-phosphate (G3P), the key precursor for phospholipid synthesis. The sequence is that of Glycerol-3-phosphate dehydrogenase [NAD(P)+] from Psychromonas ingrahamii (strain DSM 17664 / CCUG 51855 / 37).